The primary structure comprises 102 residues: MQKIRKGDKVVVLAGKDKGRTGEVIQVMPKEDRAVVRGVNVIKRHQRQTQTQEAGIISKEASLHLSNLAIVDKDGKPTRVGFKVVEGKKVRVAKTSGEVIDG.

This sequence belongs to the universal ribosomal protein uL24 family. In terms of assembly, part of the 50S ribosomal subunit.

In terms of biological role, one of two assembly initiator proteins, it binds directly to the 5'-end of the 23S rRNA, where it nucleates assembly of the 50S subunit. One of the proteins that surrounds the polypeptide exit tunnel on the outside of the subunit. In Rhizobium rhizogenes (strain K84 / ATCC BAA-868) (Agrobacterium radiobacter), this protein is Large ribosomal subunit protein uL24.